We begin with the raw amino-acid sequence, 75 residues long: Serine rich endogenous peptide 20 (75 aa).

The first 25 residues, 1 to 25 (MYKLTLCILTLSFLLLSGLSNTVLA), serve as a signal peptide directing secretion. Positions 52 to 66 (KIGASGSNSGRAPSC) match the SCOOP motif motif. Residues 54 to 75 (GASGSNSGRAPSCNNSCKPNRP) form a disordered region. The SxS motif essential for MIK2 binding motif lies at 56-58 (SGS). Residues 56-75 (SGSNSGRAPSCNNSCKPNRP) show a composition bias toward polar residues.

It belongs to the serine rich endogenous peptide (SCOOP) phytocytokine family. In terms of assembly, interacts with MIK2 (via extracellular leucine-rich repeat domain); this interaction triggers the formation of complex between MIK2 and the BAK1/SERK3 and SERK4 coreceptors, and subsequent BAK1 activation by phosphorylation. As to expression, mostly expressed in roots.

It is found in the cell membrane. The protein resides in the secreted. It localises to the extracellular space. The protein localises to the apoplast. Functionally, brassicaceae-specific phytocytokine (plant endogenous peptide released into the apoplast) perceived by MIK2 in a BAK1/SERK3 and SERK4 coreceptors-dependent manner, that modulates various physiological and antimicrobial processes including growth prevention and reactive oxygen species (ROS) response regulation. Inhibits root growth. This chain is Serine rich endogenous peptide 20, found in Arabidopsis thaliana (Mouse-ear cress).